A 1562-amino-acid chain; its full sequence is DNA-directed RNA polymerase subunit beta'' (1562 aa).

A disordered region spans residues methionine 1–serine 22. Residues asparagine 11–serine 22 are compositionally biased toward polar residues. Positions 275, 338, 345, and 348 each coordinate Zn(2+).

The protein belongs to the RNA polymerase beta' chain family. RpoC2 subfamily. In plastids the minimal PEP RNA polymerase catalytic core is composed of four subunits: alpha, beta, beta', and beta''. When a (nuclear-encoded) sigma factor is associated with the core the holoenzyme is formed, which can initiate transcription. It depends on Zn(2+) as a cofactor.

It localises to the plastid. The protein localises to the chloroplast. The enzyme catalyses RNA(n) + a ribonucleoside 5'-triphosphate = RNA(n+1) + diphosphate. Its function is as follows. DNA-dependent RNA polymerase catalyzes the transcription of DNA into RNA using the four ribonucleoside triphosphates as substrates. This Chlorella vulgaris (Green alga) protein is DNA-directed RNA polymerase subunit beta''.